Here is a 363-residue protein sequence, read N- to C-terminus: Protein RecA (363 aa).

ATP is bound at residue glycine 79–threonine 86.

This sequence belongs to the RecA family.

It localises to the cytoplasm. Can catalyze the hydrolysis of ATP in the presence of single-stranded DNA, the ATP-dependent uptake of single-stranded DNA by duplex DNA, and the ATP-dependent hybridization of homologous single-stranded DNAs. It interacts with LexA causing its activation and leading to its autocatalytic cleavage. The protein is Protein RecA of Methylobacterium sp. (strain 4-46).